Reading from the N-terminus, the 152-residue chain is Ribosome maturation factor RimP (152 aa).

Belongs to the RimP family.

It localises to the cytoplasm. Functionally, required for maturation of 30S ribosomal subunits. The chain is Ribosome maturation factor RimP from Fervidobacterium nodosum (strain ATCC 35602 / DSM 5306 / Rt17-B1).